The chain runs to 87 residues: Translation initiation factor IF-1 1 (87 aa).

The 72-residue stretch at 1–72 (MAKEELLELD…TKGRINFRHK (72 aa)) folds into the S1-like domain. The disordered stretch occupies residues 68-87 (NFRHKDANSPRPPRTGQPRR). Pro residues predominate over residues 77–87 (PRPPRTGQPRR).

Belongs to the IF-1 family. Component of the 30S ribosomal translation pre-initiation complex which assembles on the 30S ribosome in the order IF-2 and IF-3, IF-1 and N-formylmethionyl-tRNA(fMet); mRNA recruitment can occur at any time during PIC assembly.

The protein localises to the cytoplasm. Functionally, one of the essential components for the initiation of protein synthesis. Stabilizes the binding of IF-2 and IF-3 on the 30S subunit to which N-formylmethionyl-tRNA(fMet) subsequently binds. Helps modulate mRNA selection, yielding the 30S pre-initiation complex (PIC). Upon addition of the 50S ribosomal subunit IF-1, IF-2 and IF-3 are released leaving the mature 70S translation initiation complex. In Burkholderia lata (strain ATCC 17760 / DSM 23089 / LMG 22485 / NCIMB 9086 / R18194 / 383), this protein is Translation initiation factor IF-1 1.